We begin with the raw amino-acid sequence, 329 residues long: Phenylalanine--tRNA ligase alpha subunit (329 aa).

Glu-246 lines the Mg(2+) pocket.

The protein belongs to the class-II aminoacyl-tRNA synthetase family. Phe-tRNA synthetase alpha subunit type 1 subfamily. As to quaternary structure, tetramer of two alpha and two beta subunits. It depends on Mg(2+) as a cofactor.

It localises to the cytoplasm. It catalyses the reaction tRNA(Phe) + L-phenylalanine + ATP = L-phenylalanyl-tRNA(Phe) + AMP + diphosphate + H(+). In Helicobacter hepaticus (strain ATCC 51449 / 3B1), this protein is Phenylalanine--tRNA ligase alpha subunit.